The chain runs to 412 residues: Isocitrate dehydrogenase [NADP] (412 aa).

Residue T100 participates in NADP(+) binding. The D-threo-isocitrate site is built by S109, N111, R115, R125, and R149. Mg(2+) is bound at residue D301. NADP(+)-binding positions include 333 to 339 (HGSAPKY), N346, Y385, and R389.

It belongs to the isocitrate and isopropylmalate dehydrogenases family. Homodimer. The cofactor is Mg(2+). Mn(2+) is required as a cofactor.

The catalysed reaction is D-threo-isocitrate + NADP(+) = 2-oxoglutarate + CO2 + NADPH. In terms of biological role, catalyzes the oxidative decarboxylation of isocitrate to 2-oxoglutarate and carbon dioxide with the concomitant reduction of NADP(+). NAD(+) can replace NADP(+) with low efficiency. The chain is Isocitrate dehydrogenase [NADP] from Archaeoglobus fulgidus (strain ATCC 49558 / DSM 4304 / JCM 9628 / NBRC 100126 / VC-16).